The chain runs to 534 residues: Calmodulin calcium-dependent NAD kinase (534 aa).

Positions 167–196 are calmodulin-binding; it reads QKVPKLKDFVMAATRKQRFERVTKDLKVKR. 238–245 is a binding site for ATP; that stretch reads GGMGAGKS.

In terms of assembly, interacts with calmodulin (CaM) in a calcium Ca(2+)-dependent manner in vitro. Ca(2+) serves as cofactor.

The protein resides in the mitochondrion outer membrane. It catalyses the reaction NAD(+) + ATP = ADP + NADP(+) + H(+). Functionally, phosphorylates NAD(+) to produce NADP(+) in a calmodulin calcium-dependent manner. Does not possess activity toward NADH. Has broad specificity for the phosphoryl donor, as ATP, CTP, GTP and UTP can be used interchangeably and produce similar efficiencies. May play a role in producing NADP(H) needed to regulate the elicitor-induced reactive oxygen species (ROS) burst by sustaining the activity of NADPH oxidases. Does not seem to play a role in photosynthesis-driven growth. The protein is Calmodulin calcium-dependent NAD kinase of Arabidopsis thaliana (Mouse-ear cress).